Here is a 437-residue protein sequence, read N- to C-terminus: Cytochrome b (437 aa).

Residues W45–L65 traverse the membrane as a helical segment. Heme b is bound by residues H97 and H111. A run of 9 helical transmembrane segments spans residues G100 to S120, W129 to L149, F156 to I176, F194 to W214, F248 to A268, F298 to V318, F330 to D350, M365 to T385, and W391 to L411. The heme b site is built by H198 and H212.

Belongs to the cytochrome b family. As to quaternary structure, the main subunits of complex b-c1 are: cytochrome b, cytochrome c1 and the Rieske protein. Heme b is required as a cofactor.

The protein resides in the cell membrane. Component of the ubiquinol-cytochrome c reductase complex (complex III or cytochrome b-c1 complex), which is a respiratory chain that generates an electrochemical potential coupled to ATP synthesis. In Rhodobacter capsulatus (Rhodopseudomonas capsulata), this protein is Cytochrome b (petB).